We begin with the raw amino-acid sequence, 188 residues long: Pyridoxal 5'-phosphate synthase subunit PdxT (188 aa).

Position 47–49 (47–49 (GES)) interacts with L-glutamine. Catalysis depends on C79, which acts as the Nucleophile. L-glutamine is bound by residues R105 and 134–135 (IR). Residues H170 and E172 each act as charge relay system in the active site.

This sequence belongs to the glutaminase PdxT/SNO family. As to quaternary structure, in the presence of PdxS, forms a dodecamer of heterodimers. Only shows activity in the heterodimer.

The catalysed reaction is aldehydo-D-ribose 5-phosphate + D-glyceraldehyde 3-phosphate + L-glutamine = pyridoxal 5'-phosphate + L-glutamate + phosphate + 3 H2O + H(+). It catalyses the reaction L-glutamine + H2O = L-glutamate + NH4(+). The protein operates within cofactor biosynthesis; pyridoxal 5'-phosphate biosynthesis. Its function is as follows. Catalyzes the hydrolysis of glutamine to glutamate and ammonia as part of the biosynthesis of pyridoxal 5'-phosphate. The resulting ammonia molecule is channeled to the active site of PdxS. The polypeptide is Pyridoxal 5'-phosphate synthase subunit PdxT (Listeria monocytogenes serotype 4a (strain HCC23)).